A 340-amino-acid chain; its full sequence is GTP 3',8-cyclase (340 aa).

Residues 8-229 (KLGRPIRDLR…IEQHFEISPV (222 aa)) form the Radical SAM core domain. R17 contacts GTP. 2 residues coordinate [4Fe-4S] cluster: C24 and C28. Position 30 (Y30) interacts with S-adenosyl-L-methionine. C31 contributes to the [4Fe-4S] cluster binding site. R71 is a GTP binding site. G75 contacts S-adenosyl-L-methionine. T102 contacts GTP. Residue S126 participates in S-adenosyl-L-methionine binding. K163 is a GTP binding site. M197 is an S-adenosyl-L-methionine binding site. C261 and C264 together coordinate [4Fe-4S] cluster. A GTP-binding site is contributed by 266–268 (RAR). Residue C278 participates in [4Fe-4S] cluster binding.

Belongs to the radical SAM superfamily. MoaA family. Monomer and homodimer. [4Fe-4S] cluster is required as a cofactor.

The catalysed reaction is GTP + AH2 + S-adenosyl-L-methionine = (8S)-3',8-cyclo-7,8-dihydroguanosine 5'-triphosphate + 5'-deoxyadenosine + L-methionine + A + H(+). Its pathway is cofactor biosynthesis; molybdopterin biosynthesis. In terms of biological role, catalyzes the cyclization of GTP to (8S)-3',8-cyclo-7,8-dihydroguanosine 5'-triphosphate. The protein is GTP 3',8-cyclase of Staphylococcus epidermidis (strain ATCC 35984 / DSM 28319 / BCRC 17069 / CCUG 31568 / BM 3577 / RP62A).